Here is a 426-residue protein sequence, read N- to C-terminus: Anaerobic glycerol-3-phosphate dehydrogenase subunit B (426 aa).

The protein belongs to the anaerobic G-3-P dehydrogenase subunit B family. Composed of a catalytic GlpA/B dimer and of membrane bound GlpC. Requires FMN as cofactor.

It carries out the reaction a quinone + sn-glycerol 3-phosphate = dihydroxyacetone phosphate + a quinol. The protein operates within polyol metabolism; glycerol degradation via glycerol kinase pathway; glycerone phosphate from sn-glycerol 3-phosphate (anaerobic route): step 1/1. Conversion of glycerol 3-phosphate to dihydroxyacetone. Uses fumarate or nitrate as electron acceptor. The sequence is that of Anaerobic glycerol-3-phosphate dehydrogenase subunit B from Haemophilus ducreyi (strain 35000HP / ATCC 700724).